Consider the following 613-residue polypeptide: Ribosome-associated molecular chaperone SSB1 (613 aa).

Residues 1–391 (MADGVFQGAI…ILTGQSTNDD (391 aa)) are nucleotide binding domain (NBD). Residues 16-18 (TTY), K73, 205-207 (GGT), 271-278 (ERAKRSLS), and G342 contribute to the ATP site. The segment at 392–402 (TKDLLLLDVIP) is inter-domain linker. The interval 403 to 613 (LSLGVAMQGN…RAVTKGMATR (211 aa)) is substrate binding domain (SBD). The interval 516-612 (TEEIEKMISD…KRAVTKGMAT (97 aa)) is lid domain (SBDalpha). The short motif at 574–582 (IEAALSDAL) is the Nuclear export signal element.

Belongs to the heat shock protein 70 family. Ssb-type Hsp70 subfamily. In terms of assembly, binds to ribosomes. Binds close to the ribosomal tunnel exit via contacts with both ribosomal proteins and rRNA. Directly interacts with nascent polypeptides. This interaction is dependent on the ribosome-associated complex (RAC). Interacts with SSE1. Interacts with FES1.

The protein resides in the cytoplasm. The catalysed reaction is ATP + H2O = ADP + phosphate + H(+). Functionally, ribosome-bound, Hsp70-type chaperone that assists in the cotranslational folding of newly synthesized proteins in the cytosol. Stimulates folding by interacting with nascent chains, binding to short, largely hydrophobic sequences exposed by unfolded proteins, thereby stabilizing longer, more slowly translated, and aggregation-prone nascent polypeptides and domains that cannot fold stably until fully synthesized. The Hsp70-protein substrate interaction depends on ATP-binding and on allosteric regulation between the NBD and the SBD. The ATP-bound state is characterized by a fast exchange rate of substrate (low affinity state), while in the ADP-bound state exchange is much slower (high affinity state). During the Hsp70 cycle, the chaperone switches between the ATP-bound state (open conformation) and the ADP-bound state (closed conformation) by major conformational rearrangements involving mainly the lid domain. Ssb cooperates with a specific Hsp40/Hsp70 co-chaperone termed the ribosome-associated complex (RAC), which stimulates the ATPase activity of the ribosome-associated pool of Ssbs and switches it to the high affinity substrate binding state. Hsp110 chaperone SSE1 and FES1 act as nucleotide exchange factors that cause substrate release. The polypeptide is Ribosome-associated molecular chaperone SSB1 (SSB1) (Candida albicans (strain WO-1) (Yeast)).